The primary structure comprises 128 residues: Fluoride-specific ion channel FluC (128 aa).

The next 4 helical transmembrane spans lie at 4–24 (VFLL…VSTW), 35–55 (FGIL…WSIA), 67–87 (FLFT…LDTM), and 99–119 (LLNV…GIIL). Residues G74 and T77 each contribute to the Na(+) site.

This sequence belongs to the fluoride channel Fluc/FEX (TC 1.A.43) family.

It localises to the cell inner membrane. The catalysed reaction is fluoride(in) = fluoride(out). With respect to regulation, na(+) is not transported, but it plays an essential structural role and its presence is essential for fluoride channel function. Functionally, fluoride-specific ion channel. Important for reducing fluoride concentration in the cell, thus reducing its toxicity. This Parabacteroides distasonis (strain ATCC 8503 / DSM 20701 / CIP 104284 / JCM 5825 / NCTC 11152) protein is Fluoride-specific ion channel FluC.